Reading from the N-terminus, the 60-residue chain is Ribosome biogenesis protein Nop10 (60 aa).

Residues 29-60 (CDGPTENSAPAPFSPEDPYGEYRRRVRRRASE) are disordered.

It belongs to the NOP10 family.

Its function is as follows. Involved in ribosome biogenesis; more specifically in 18S rRNA pseudouridylation and in cleavage of pre-rRNA. This Halorubrum lacusprofundi (strain ATCC 49239 / DSM 5036 / JCM 8891 / ACAM 34) protein is Ribosome biogenesis protein Nop10.